The primary structure comprises 1412 residues: MKALLDLFKQVQQEEIFDAIKIGLASPDKIRSWSFGEVKKPETINYRTFKPERDGLFCAKIFGPIKDYECLCGKYKRLKHRGVICEKCGVEVTLAKVRRERMGHIELASPVAHIWFLKSLPSRLGMVLDMTLRDIERVLYFEAYVVIDPGMTPLKARQIMTEEDYYNKVEEYGDEFRAEMGAEGVRELLRSINIDEQVETLRTELKNTGSEAKIKKYAKRLKVLEAFQRSGIKPDWMILEVLPVLPPELRPLVPLDGGRFATSDLNDLYRRVINRNNRLKRLLELKAPEIIVRNEKRMLQEAVDSLLDNGRRGKAMTGANKRPLKSLADMIKGKGGRFRQNLLGKRVDYSGRSVIVVGPTLKLHQCGLPKLMALELFKPFIFNKLEVMGVATTIKAAKKEVENQTPVVWDILEEVIREHPVMLNRAPTLHRLGIQAFEPVLIEGKAIQLHPLVCAAFNADFDGDQMAVHVPLSLEAQMEARTLMLASNNVLFPANGDPSIVPSQDIVLGLYYATREAINGKGEGLSFTGVSEVIRAYENKEVELASRVNVRITEMVRNEDTSEGAPQFVPKISLYATTVGRAILSEILPPGLPFSVLNKPLKKKEISRLINTAFRKCGLRATVVFADQLMQSGFRLATRAGISICVDDMLVPTQKETIVGDAAKKVKEYDRQYMSGLVTAQERYNNVVDIWSATSEAVGKAMMEQLSTEPVIDRGGNETRQESFNSIYMMADSGARGSAVQIRQLAGMRGLMAKPDGSIIETPITANFREGLNVLQYFISTHGARKGLADTALKTANSGYLTRRLVDVTQDLVVVEDDCGTSNGVAMKALVEGGEVVEALRDRILGRVAASDVVNPETQETLYEAGALLDETAVEDIERLGIDEVRVRTALTCETRYGLCASCYGRDLGRGSLVNVGEAVGVIAAQSIGEPGTQLTMRTFHIGGAASRAAVASSVEAKSNGTVRFTASMRYVTNAKGEQIVISRSGEALITDDIGRERERHKIPYGATLLQLDGAAIKAGTQLATWDPLTRPIITEYGGTVKFENVEEGVTVAKQIDDVTGLSTLVVIDVKRRGSQAAKSVRPQVKLLDANGDEVKIPGTEHAVQIGFQVGALITVKDGQQVQVGEVLARIPTESQKTRDITGGLPRVAELFEARSPKDAGILAEVTGTVSFGKDTKGKQRLVITDLEGNQHEFLIAKEKQVLVHDGQVVNKGEMIVDGPADPHDILRLQGIEALSRYIVDEVQDVYRLQGVKINDKHIEVIVRQMLRRVQIVDNGDTRFIPGEQVERSDMLDENDRMIAEDKRPATYDNILLGITKASLSTDSFISAASFQETIRVLTEAAIMGKRDDLRGLKENVIVGRLIPAGTGLAFHKARKAKEQSDRERFDQIAAEEAFEFGTPSAPAEEPQHPAE.

Zn(2+) contacts are provided by cysteine 70, cysteine 72, cysteine 85, and cysteine 88. Aspartate 460, aspartate 462, and aspartate 464 together coordinate Mg(2+). Zn(2+)-binding residues include cysteine 819, cysteine 893, cysteine 900, and cysteine 903. The disordered stretch occupies residues 1392–1412 (EEAFEFGTPSAPAEEPQHPAE).

Belongs to the RNA polymerase beta' chain family. As to quaternary structure, the RNAP catalytic core consists of 2 alpha, 1 beta, 1 beta' and 1 omega subunit. When a sigma factor is associated with the core the holoenzyme is formed, which can initiate transcription. It depends on Mg(2+) as a cofactor. Zn(2+) is required as a cofactor.

The catalysed reaction is RNA(n) + a ribonucleoside 5'-triphosphate = RNA(n+1) + diphosphate. Functionally, DNA-dependent RNA polymerase catalyzes the transcription of DNA into RNA using the four ribonucleoside triphosphates as substrates. This is DNA-directed RNA polymerase subunit beta' from Burkholderia mallei (strain NCTC 10247).